Consider the following 156-residue polypeptide: Nuclear cap-binding protein subunit 2 (156 aa).

The residue at position 2 (serine 2) is an N-acetylserine. Phosphoserine is present on residues serine 13 and serine 18. MRNA is bound by residues tyrosine 20, tyrosine 43, 112 to 116, 123 to 127, and 133 to 134; these read RTDWD, RQYGR, and QV. One can recognise an RRM domain in the interval 40–118; the sequence is CTLYVGNLSF…RIIRTDWDAG (79 aa). The tract at residues 124-156 is disordered; it reads QYGRGRSGGQVRDEYREDYDAGRGGYGKLAQKQ. The segment covering 134–144 has biased composition (basic and acidic residues); it reads VRDEYREDYDA. Arginine 146 bears the Omega-N-methylarginine mark.

It belongs to the RRM NCBP2 family. As to quaternary structure, component of the nuclear cap-binding complex (CBC), a heterodimer composed of NCBP1/CBP80 and NCBP2/CBP20 that interacts with m7GpppG-capped RNA. Found in a U snRNA export complex with PHAX/RNUXA, NCBP1/CBP80, NCBP2/CBP20, RAN, XPO1 and m7G-capped RNA. Interacts with PHAX/RNUXA, EIF4G1, HNRNPF, HNRNPH1 and ALYREF/THOC4/ALY. Interacts with SRRT/ARS2 and KPNA3.

The protein resides in the nucleus. It localises to the cytoplasm. In terms of biological role, component of the cap-binding complex (CBC), which binds co-transcriptionally to the 5' cap of pre-mRNAs and is involved in various processes such as pre-mRNA splicing, translation regulation, nonsense-mediated mRNA decay, RNA-mediated gene silencing (RNAi) by microRNAs (miRNAs) and mRNA export. The CBC complex is involved in mRNA export from the nucleus via its interaction with ALYREF/THOC4/ALY, leading to the recruitment of the mRNA export machinery to the 5' end of mRNA and to mRNA export in a 5' to 3' direction through the nuclear pore. The CBC complex is also involved in mediating U snRNA and intronless mRNAs export from the nucleus. The CBC complex is essential for a pioneer round of mRNA translation, before steady state translation when the CBC complex is replaced by cytoplasmic cap-binding protein eIF4E. The pioneer round of mRNA translation mediated by the CBC complex plays a central role in nonsense-mediated mRNA decay (NMD), NMD only taking place in mRNAs bound to the CBC complex, but not on eIF4E-bound mRNAs. The CBC complex enhances NMD in mRNAs containing at least one exon-junction complex (EJC) via its interaction with UPF1, promoting the interaction between UPF1 and UPF2. The CBC complex is also involved in 'failsafe' NMD, which is independent of the EJC complex, while it does not participate in Staufen-mediated mRNA decay (SMD). During cell proliferation, the CBC complex is also involved in microRNAs (miRNAs) biogenesis via its interaction with SRRT/ARS2, thereby being required for miRNA-mediated RNA interference. The CBC complex also acts as a negative regulator of PARN, thereby acting as an inhibitor of mRNA deadenylation. In the CBC complex, NCBP2/CBP20 recognizes and binds capped RNAs (m7GpppG-capped RNA) but requires NCBP1/CBP80 to stabilize the movement of its N-terminal loop and lock the CBC into a high affinity cap-binding state with the cap structure. The conventional cap-binding complex with NCBP2 binds both small nuclear RNA (snRNA) and messenger (mRNA) and is involved in their export from the nucleus. This Mus musculus (Mouse) protein is Nuclear cap-binding protein subunit 2 (Ncbp2).